We begin with the raw amino-acid sequence, 988 residues long: Centrosomal protein of 120 kDa (988 aa).

The 112-residue stretch at M1 to Y112 folds into the C2 1 domain. Residues Q354 to V425 form a disordered region. Positions S384–T394 are enriched in pro residues. The C2 2 domain occupies T435 to G569. Positions G624–I644 are disordered. A coiled-coil region spans residues A706 to S929. 2 positions are modified to phosphoserine: S934 and S938.

It belongs to the CEP120 family. In terms of assembly, interacts with TACC2, TACC3, CCDC52, TALPID3. As to expression, ubiquitous. Highly expressed in brain, lung and kidney and weakly expressed in heart, liver, small intestine and limb (at protein level). Expressed in brain.

It is found in the cytoplasm. Its subcellular location is the cytoskeleton. The protein resides in the microtubule organizing center. It localises to the centrosome. Plays a role in the microtubule-dependent coupling of the nucleus and the centrosome. Involved in the processes that regulate centrosome-mediated interkinetic nuclear migration (INM) of neural progenitors and for proper positioning of neurons during brain development. Also implicated in the migration and selfrenewal of neural progenitors. Required for centriole duplication and maturation during mitosis and subsequent ciliogenesis. Required for the recruitment of CEP295 to the proximal end of new-born centrioles at the centriolar microtubule wall during early S phase in a PLK4-dependent manner. The chain is Centrosomal protein of 120 kDa (Cep120) from Mus musculus (Mouse).